Consider the following 245-residue polypeptide: Eukaryotic translation initiation factor 6 (245 aa).

This sequence belongs to the eIF-6 family. Monomer. Associates with the 60S ribosomal subunit.

The protein resides in the cytoplasm. Its subcellular location is the nucleus. It localises to the nucleolus. Its function is as follows. Binds to the 60S ribosomal subunit and prevents its association with the 40S ribosomal subunit to form the 80S initiation complex in the cytoplasm. May also be involved in ribosome biogenesis. The protein is Eukaryotic translation initiation factor 6 (eif6) of Danio rerio (Zebrafish).